A 138-amino-acid chain; its full sequence is Ribulose bisphosphate carboxylase small subunit (138 aa).

This sequence belongs to the RuBisCO small chain family. Heterohexadecamer of 8 large and 8 small subunits.

The protein resides in the plastid. The protein localises to the chloroplast. Its function is as follows. RuBisCO catalyzes two reactions: the carboxylation of D-ribulose 1,5-bisphosphate, the primary event in carbon dioxide fixation, as well as the oxidative fragmentation of the pentose substrate in the photorespiration process. Both reactions occur simultaneously and in competition at the same active site. Although the small subunit is not catalytic it is essential for maximal activity. The sequence is that of Ribulose bisphosphate carboxylase small subunit from Antithamnion sp. (Red alga).